The sequence spans 351 residues: tRNA-splicing endonuclease (351 aa).

Active-site residues include Tyr287, His298, and Lys329.

This sequence belongs to the tRNA-intron endonuclease family. Archaeal long subfamily. As to quaternary structure, homodimer.

It carries out the reaction pretRNA = a 3'-half-tRNA molecule with a 5'-OH end + a 5'-half-tRNA molecule with a 2',3'-cyclic phosphate end + an intron with a 2',3'-cyclic phosphate and a 5'-hydroxyl terminus.. In terms of biological role, endonuclease that removes tRNA introns. Cleaves pre-tRNA at the 5'- and 3'-splice sites to release the intron. The products are an intron and two tRNA half-molecules bearing 2',3' cyclic phosphate and 5'-OH termini. Recognizes a pseudosymmetric substrate in which 2 bulged loops of 3 bases are separated by a stem of 4 bp. In Methanococcoides burtonii (strain DSM 6242 / NBRC 107633 / OCM 468 / ACE-M), this protein is tRNA-splicing endonuclease.